Reading from the N-terminus, the 150-residue chain is Large ribosomal subunit protein bL9 (150 aa).

Belongs to the bacterial ribosomal protein bL9 family.

Functionally, binds to the 23S rRNA. This chain is Large ribosomal subunit protein bL9, found in Clavibacter sepedonicus (Clavibacter michiganensis subsp. sepedonicus).